A 27-amino-acid chain; its full sequence is Conotoxin as14a (27 aa).

Intrachain disulfides connect Cys-6–Cys-26 and Cys-10–Cys-22.

The protein belongs to the conotoxin L superfamily. In terms of tissue distribution, expressed by the venom duct.

The protein resides in the secreted. In terms of biological role, in vivo, intracranial injection, elicits scratching and grooming activity in mice. The chain is Conotoxin as14a from Conus cancellatus (Cancellate cone).